A 476-amino-acid chain; its full sequence is Bifunctional protein HldE (476 aa).

A ribokinase region spans residues 1–318; that stretch reads MKPILPDYNN…AEAIHGSRDT (318 aa). Position 195–198 (195–198) interacts with ATP; it reads NMSE. Residue Asp264 is part of the active site. Residues 344–476 form a cytidylyltransferase region; sequence MTNGCFDILH…IIDAIKGGRG (133 aa).

In the N-terminal section; belongs to the carbohydrate kinase PfkB family. The protein in the C-terminal section; belongs to the cytidylyltransferase family. As to quaternary structure, homodimer.

It carries out the reaction D-glycero-beta-D-manno-heptose 7-phosphate + ATP = D-glycero-beta-D-manno-heptose 1,7-bisphosphate + ADP + H(+). It catalyses the reaction D-glycero-beta-D-manno-heptose 1-phosphate + ATP + H(+) = ADP-D-glycero-beta-D-manno-heptose + diphosphate. The protein operates within nucleotide-sugar biosynthesis; ADP-L-glycero-beta-D-manno-heptose biosynthesis; ADP-L-glycero-beta-D-manno-heptose from D-glycero-beta-D-manno-heptose 7-phosphate: step 1/4. It functions in the pathway nucleotide-sugar biosynthesis; ADP-L-glycero-beta-D-manno-heptose biosynthesis; ADP-L-glycero-beta-D-manno-heptose from D-glycero-beta-D-manno-heptose 7-phosphate: step 3/4. It participates in bacterial outer membrane biogenesis; LPS core biosynthesis. In terms of biological role, catalyzes the phosphorylation of D-glycero-D-manno-heptose 7-phosphate at the C-1 position to selectively form D-glycero-beta-D-manno-heptose-1,7-bisphosphate. Its function is as follows. Catalyzes the ADP transfer from ATP to D-glycero-beta-D-manno-heptose 1-phosphate, yielding ADP-D-glycero-beta-D-manno-heptose. The chain is Bifunctional protein HldE from Vibrio vulnificus (strain YJ016).